A 471-amino-acid polypeptide reads, in one-letter code: L-amino acid dehydrogenase (471 aa).

G31 is a Mg(2+) binding site. Position 33 (S33) interacts with FAD. G34 provides a ligand contact to Mg(2+). 3 residues coordinate FAD: E52, R60, and V256. A283 provides a ligand contact to Mg(2+). F453 is a binding site for FAD.

It belongs to the flavin monoamine oxidase family. FAD is required as a cofactor. Requires Mg(2+) as cofactor.

The protein localises to the cellular thylakoid membrane. It carries out the reaction a plastoquinone + an L-alpha-amino acid + H2O = a plastoquinol + a 2-oxocarboxylate + NH4(+). It catalyses the reaction a plastoquinone + L-arginine + H2O = a plastoquinol + 5-guanidino-2-oxopentanoate + NH4(+). It functions in the pathway amino-acid degradation; L-arginine degradation. Inhibited by Ca(2+) and other cations such as Ni(2+), Co(2+) and Zn(2+). The inhibition by o-phenanthroline and salicylhydroxamic acid suggests the presence of a metal cofactor besides FAD in the enzyme. The L-arginine-stimulated O(2) consumption involving slr0782 is inhibited by inhibitors of the respiratory electron transport chain, such as KCN and 2,5-dibromo-3-methyl-6-isopropyl-p-benzoquinone, which indicates a participation of the cytochrome b6/f complex and of a cytochrome oxidase. In terms of biological role, L-amino acid dehydrogenase with broad substrate specificity. Catalyzes the oxidative deamination of various L-amino acids, L-Arg and L-Cys being the best substrates in vitro. Likely functions mainly as an L-arginine dehydrogenase in vivo. Probably feeds electrons from L-arginine oxidation and also from the oxidation of other L-amino acids into the respiratory electron transport chain associated to the thylakoid membrane, and does not directly interact with molecular oxygen but donates electrons to the plastoquinone pool. Cannot use D-amino acids as substrates. The polypeptide is L-amino acid dehydrogenase (Synechocystis sp. (strain ATCC 27184 / PCC 6803 / Kazusa)).